A 269-amino-acid polypeptide reads, in one-letter code: Protein OPG079 (269 aa).

The protein belongs to the orthopoxvirus OPG079 family. Homoomultimer (Potential). Interacts with the small subunit of ribonucleotide reductase. Interacts with host FAM111A; this interaction protomtes OPG079 degradation through autophagy.

The protein localises to the host cytoplasm. Functionally, plays an essential role in viral DNA replication. Binds to ssDNA with high affinity and localizes to cytoplasmic factories where nascent viral genomes accumulate. May disrupt loops, hairpins and other secondary structures present on ssDNA to reduce and eliminate pausing of viral DNA polymerase at specific sites during elongation. The sequence is that of Protein OPG079 (OPG079) from Variola virus (isolate Human/India/Ind3/1967) (VARV).